The sequence spans 636 residues: Phosphomethylpyrimidine synthase (636 aa).

The segment at 48-70 (DDTPTDFGGEKNPPVRVYDTSGP) is disordered. Residues asparagine 231, methionine 260, tyrosine 289, histidine 325, 345–347 (SRG), 386–389 (DGLR), and glutamate 425 each bind substrate. Histidine 429 provides a ligand contact to Zn(2+). Tyrosine 452 lines the substrate pocket. Residue histidine 493 coordinates Zn(2+). Cysteine 573, cysteine 576, and cysteine 581 together coordinate [4Fe-4S] cluster.

Belongs to the ThiC family. In terms of assembly, homodimer. Requires [4Fe-4S] cluster as cofactor.

It catalyses the reaction 5-amino-1-(5-phospho-beta-D-ribosyl)imidazole + S-adenosyl-L-methionine = 4-amino-2-methyl-5-(phosphooxymethyl)pyrimidine + CO + 5'-deoxyadenosine + formate + L-methionine + 3 H(+). Its pathway is cofactor biosynthesis; thiamine diphosphate biosynthesis. Functionally, catalyzes the synthesis of the hydroxymethylpyrimidine phosphate (HMP-P) moiety of thiamine from aminoimidazole ribotide (AIR) in a radical S-adenosyl-L-methionine (SAM)-dependent reaction. In Cellvibrio japonicus (strain Ueda107) (Pseudomonas fluorescens subsp. cellulosa), this protein is Phosphomethylpyrimidine synthase.